The following is a 455-amino-acid chain: MARPVVAIIGRPNVGKSTLVNRLCRSREAIVHDQPGVTRDRTYQDGYWGDREFKVVDTGGLVFDDDSEFLPEIREQASLALAEASVALVIVDGQQGLTAADESIAEWLRTQNCKTLLAVNKCESPEQGLGMAAEFWRLGLGEPHPISAIHGAGTAELLDQVLTFLPPKDEESDEEEPIQLSIIGRPNVGKSSLLNSICGETRAIVSPIRGTTRDTIDTRIERENRRWRLIDTAGIRRRRSVNYGPEFFGINRSFKAIERSDVCVLVIDALDGVTEQDQRLAGRIEEDGRACVVVVNKWDAVEKDSHTMTAMEKELRAKLYFLDWAPMLFTSALTGQRVDSIFALAALAVEQHRRRVSTSVVNEVLKEALSWRSPPTTRGGRQGRLYYGTQVASRPPSFTLFVNEPKLFGDTYRRYVERQIREGLGFDGTPVKLFWRGKQQRDAEKELVRQQNRQG.

EngA-type G domains lie at 4–169 (PVVA…PPKD) and 178–353 (IQLS…EQHR). GTP contacts are provided by residues 10–17 (GRPNVGKS), 57–61 (DTGGL), 120–123 (NKCE), 184–191 (GRPNVGKS), 231–235 (DTAGI), and 296–299 (NKWD). The region spanning 354–439 (RRVSTSVVNE…PVKLFWRGKQ (86 aa)) is the KH-like domain.

The protein belongs to the TRAFAC class TrmE-Era-EngA-EngB-Septin-like GTPase superfamily. EngA (Der) GTPase family. As to quaternary structure, associates with the 50S ribosomal subunit.

GTPase that plays an essential role in the late steps of ribosome biogenesis. The chain is GTPase Der from Synechococcus sp. (strain CC9311).